We begin with the raw amino-acid sequence, 206 residues long: tRNA(Phe) 7-((3-amino-3-carboxypropyl)-4-demethylwyosine(37)-N(4))-methyltransferase 2 (206 aa).

Belongs to the TYW3 family.

The enzyme catalyses 4-demethyl-7-[(3S)-3-amino-3-carboxypropyl]wyosine(37) in tRNA(Phe) + S-adenosyl-L-methionine = 7-[(3S)-3-amino-3-carboxypropyl]wyosine(37) in tRNA(Phe) + S-adenosyl-L-homocysteine + H(+). S-adenosyl-L-methionine-dependent methyltransferase that acts as a component of the wyosine derivatives biosynthesis pathway. Probably methylates N-4 position of wybutosine-86 to produce wybutosine-72. This is tRNA(Phe) 7-((3-amino-3-carboxypropyl)-4-demethylwyosine(37)-N(4))-methyltransferase 2 from Pyrococcus horikoshii (strain ATCC 700860 / DSM 12428 / JCM 9974 / NBRC 100139 / OT-3).